Here is a 202-residue protein sequence, read N- to C-terminus: Superoxide dismutase [Mn] (202 aa).

Mn(2+) is bound at residue histidine 27. Phosphothreonine occurs at positions 34 and 70. Mn(2+) contacts are provided by histidine 82, aspartate 164, and histidine 168.

It belongs to the iron/manganese superoxide dismutase family. In terms of assembly, homodimer; under aerobic conditions. Under anaerobic conditions it is a component of the so-called 'green protein' complex (GPC), which consists of at least two components, SodA and a nucleoside diphosphate kinase (NDK). Mn(2+) serves as cofactor.

The protein localises to the cytoplasm. It carries out the reaction 2 superoxide + 2 H(+) = H2O2 + O2. Its function is as follows. Destroys superoxide anion radicals which are normally produced within the cells and which are toxic to biological systems. Active only in homodimeric state. The protein is Superoxide dismutase [Mn] (sodA) of Virgibacillus halodenitrificans (Bacillus halodenitrificans).